Reading from the N-terminus, the 1383-residue chain is DNA-directed RNA polymerase subunit beta (1383 aa).

It belongs to the RNA polymerase beta chain family. The RNAP catalytic core consists of 2 alpha, 1 beta, 1 beta' and 1 omega subunit. When a sigma factor is associated with the core the holoenzyme is formed, which can initiate transcription.

The enzyme catalyses RNA(n) + a ribonucleoside 5'-triphosphate = RNA(n+1) + diphosphate. Functionally, DNA-dependent RNA polymerase catalyzes the transcription of DNA into RNA using the four ribonucleoside triphosphates as substrates. The chain is DNA-directed RNA polymerase subunit beta from Bartonella tribocorum (strain CIP 105476 / IBS 506).